The chain runs to 570 residues: GDP-Man:Man(3)GlcNAc(2)-PP-Dol alpha-1,2-mannosyltransferase (570 aa).

Residues 1-7 (MKLADFV) lie on the Lumenal side of the membrane. Residues 8–70 (TYVFGSLLAG…DFGWKNSSVR (63 aa)) traverse the membrane as a helical segment. The Cytoplasmic portion of the chain corresponds to 71 to 200 (RAFILASERP…RLVESKSWPK (130 aa)). An intramembrane region (helical) is located at residues 201-221 (FTLLGQAYGSIILSIEALTTL). The Cytoplasmic segment spans residues 222–446 (APDYWIDTMG…FGINAMWNEH (225 aa)). Positions 447–467 (FGIAVVEYMASGLIPLCHASA) form an intramembrane region, helical. Topologically, residues 468 to 570 (GPLYDIVVPW…LNLTHNRMFS (103 aa)) are cytoplasmic.

It belongs to the glycosyltransferase group 1 family.

The protein localises to the endoplasmic reticulum membrane. The enzyme catalyses an alpha-D-Man-(1-&gt;3)-[alpha-D-Man-(1-&gt;6)]-beta-D-Man-(1-&gt;4)-beta-D-GlcNAc-(1-&gt;4)-alpha-D-GlcNAc-diphospho-di-trans,poly-cis-dolichol + 2 GDP-alpha-D-mannose = an alpha-D-Man-(1-&gt;2)-alpha-D-Man-(1-&gt;2)-alpha-D-Man-(1-&gt;3)-[alpha-D-Man-(1-&gt;6)]-beta-D-Man-(1-&gt;4)-beta-D-GlcNAc-(1-&gt;4)-alpha-D-GlcNAc-diphospho-di-trans,poly-cis-dolichol + 2 GDP + 2 H(+). Its pathway is protein modification; protein glycosylation. In terms of biological role, GDP-Man:Man(3)GlcNAc(2)-PP-Dol alpha-1,2-mannosyltransferase that operates in the biosynthetic pathway of dolichol-linked oligosaccharides, the glycan precursors employed in protein asparagine (N)-glycosylation. The assembly of dolichol-linked oligosaccharides begins on the cytosolic side of the endoplasmic reticulum membrane and finishes in its lumen. The sequential addition of sugars to dolichol pyrophosphate produces dolichol-linked oligosaccharides containing fourteen sugars, including two GlcNAcs, nine mannoses and three glucoses. Once assembled, the oligosaccharide is transferred from the lipid to nascent proteins by oligosaccharyltransferases. Catalyzes, on the cytoplasmic face of the endoplasmic reticulum, the addition of the fourth and fifth mannose residues to the dolichol-linked oligosaccharide chain, to produce Man(5)GlcNAc(2)-PP-dolichol core oligosaccharide. The sequence is that of GDP-Man:Man(3)GlcNAc(2)-PP-Dol alpha-1,2-mannosyltransferase (ALG11) from Kluyveromyces lactis (strain ATCC 8585 / CBS 2359 / DSM 70799 / NBRC 1267 / NRRL Y-1140 / WM37) (Yeast).